Consider the following 459-residue polypeptide: Sperm microtubule associated protein 2-like (459 aa).

The segment at M1–P138 is disordered. Residues T21 to T30 show a composition bias toward low complexity. Residues N47–Y63 show a composition bias toward acidic residues. Basic and acidic residues predominate over residues E64 to E73. Polar residues predominate over residues S77 to P87. Basic and acidic residues-rich tracts occupy residues K91 to D112 and E127 to L136. 8 THEG repeats span residues K172 to Q190, A212 to V231, P258 to F277, T291 to T310, S327 to K346, A367 to V386, A403 to R422, and S440 to R459.

This Mus musculus (Mouse) protein is Sperm microtubule associated protein 2-like.